The primary structure comprises 117 residues: NADH-quinone oxidoreductase subunit A (117 aa).

The next 3 membrane-spanning stretches (helical) occupy residues 4 to 24 (WIGVALFIVVGIVFGAGGMLT), 64 to 84 (LMFVIFDVEVIYLYPWAVSFV), and 86 to 106 (LGLAGLIKMFLFIFILVLGLW).

This sequence belongs to the complex I subunit 3 family. In terms of assembly, NDH-1 is composed of 14 different subunits. Subunits NuoA, H, J, K, L, M, N constitute the membrane sector of the complex.

It localises to the cell membrane. It catalyses the reaction a quinone + NADH + 5 H(+)(in) = a quinol + NAD(+) + 4 H(+)(out). In terms of biological role, NDH-1 shuttles electrons from NADH, via FMN and iron-sulfur (Fe-S) centers, to quinones in the respiratory chain. The immediate electron acceptor for the enzyme in this species is believed to be a menaquinone. Couples the redox reaction to proton translocation (for every two electrons transferred, four hydrogen ions are translocated across the cytoplasmic membrane), and thus conserves the redox energy in a proton gradient. In Desulforamulus reducens (strain ATCC BAA-1160 / DSM 100696 / MI-1) (Desulfotomaculum reducens), this protein is NADH-quinone oxidoreductase subunit A.